Here is a 370-residue protein sequence, read N- to C-terminus: Pantothenate kinase 3 (370 aa).

Glu138 functions as the Proton acceptor in the catalytic mechanism. Acetyl-CoA contacts are provided by Ser192, Ser195, and Arg207.

Belongs to the type II pantothenate kinase family. In terms of assembly, homodimer. In terms of tissue distribution, highly expressed in the liver.

The protein localises to the cytoplasm. It carries out the reaction (R)-pantothenate + ATP = (R)-4'-phosphopantothenate + ADP + H(+). It participates in cofactor biosynthesis; coenzyme A biosynthesis; CoA from (R)-pantothenate: step 1/5. Subject to allosteric regulation, exists in two distinct conformational states, a catalytically incompetent (or open) conformation stabilized by the binding of acetyl(acyl)-CoA, and a catalytically competent (or closed) conformation stabilized by ATP-binding. Acetyl-CoA and its thioesters act as allosteric inhibitors and compete with the ATP-binding site. Strongly inhibited by acetyl-CoA, malonyl-CoA and palmitoyl CoA and modestly inhibited by CoA. Inhibited by calcium hopantenate. In terms of biological role, catalyzes the phosphorylation of pantothenate to generate 4'-phosphopantothenate in the first and rate-determining step of coenzyme A (CoA) synthesis. This chain is Pantothenate kinase 3 (Pank3), found in Mus musculus (Mouse).